Here is a 190-residue protein sequence, read N- to C-terminus: Peptide deformylase (190 aa).

Fe cation is bound by residues Cys106 and His148. Residue Glu149 is part of the active site. Position 152 (His152) interacts with Fe cation.

This sequence belongs to the polypeptide deformylase family. The cofactor is Fe(2+).

It catalyses the reaction N-terminal N-formyl-L-methionyl-[peptide] + H2O = N-terminal L-methionyl-[peptide] + formate. Removes the formyl group from the N-terminal Met of newly synthesized proteins. Requires at least a dipeptide for an efficient rate of reaction. N-terminal L-methionine is a prerequisite for activity but the enzyme has broad specificity at other positions. The sequence is that of Peptide deformylase from Methylacidiphilum infernorum (isolate V4) (Methylokorus infernorum (strain V4)).